The following is a 402-amino-acid chain: Multidrug resistance protein MdtH (402 aa).

Over 1–12 the chain is Cytoplasmic; it reads MSRVSQARNLGK. A helical membrane pass occupies residues 13–33; sequence YFLLIDNMLVVLGFFVVFPLI. Residues 34-98 lie on the Periplasmic side of the membrane; it reads SIRFVDQMGW…GFATMGIAHE (65 aa). The chain crosses the membrane as a helical span at residues 99–116; sequence PWLLWFSCLLSGLGGTLF. Topologically, residues 117–138 are cytoplasmic; it reads DPPRSALVVKLIRPQQRGRFFS. Residues 139–159 traverse the membrane as a helical segment; it reads LLMMQDSAGAVIGALLGSWLL. At 160–164 the chain is on the periplasmic side; it reads QYDFR. Residues 165–185 form a helical membrane-spanning segment; it reads LVCATGAVLFVLCAAFNAWLL. Over 186–213 the chain is Cytoplasmic; it reads PAWKLSTVRTPVREGMTRVMRDKRFVTY. Residues 214 to 234 traverse the membrane as a helical segment; the sequence is VLTLAGYYMLAVQVMLMLPIM. At 235 to 243 the chain is on the periplasmic side; the sequence is VNDVAGAPS. A helical membrane pass occupies residues 244–264; the sequence is AVKWMYAIEACLSLTLLYPIA. Residues 265–276 are Cytoplasmic-facing; sequence RWSEKHFRLEHR. The chain crosses the membrane as a helical span at residues 277 to 297; that stretch reads LMAGLLIMSLSMMPVGMVSGL. The Periplasmic segment spans residues 298–299; sequence QQ. Residues 300–320 traverse the membrane as a helical segment; that stretch reads LFTLICLFYIGSIIAEPARET. At 321 to 339 the chain is on the cytoplasmic side; it reads LSASLADARARGSYMGFSR. A helical membrane pass occupies residues 340–360; it reads LGLAIGGAIGYIGGGWLFDLG. The Periplasmic segment spans residues 361–367; sequence KSAHQPE. A helical transmembrane segment spans residues 368–388; the sequence is LPWMMLGIIGIFTFLALGWQF. The Cytoplasmic segment spans residues 389–402; that stretch reads SQKRTARRLLERDA.

This sequence belongs to the major facilitator superfamily. DHA1 family. MdtH (TC 2.A.1.2.21) subfamily.

Its subcellular location is the cell inner membrane. Its function is as follows. Confers resistance to norfloxacin and enoxacin. This is Multidrug resistance protein MdtH from Escherichia coli O7:K1 (strain IAI39 / ExPEC).